Consider the following 49-residue polypeptide: Small, acid-soluble spore protein O (49 aa).

A disordered region spans residues 1-49 (MVKRKANHVIPGMNDASAQGKGAGYNEELSNEPLTEAQKQNNKKRKKNQ).

It belongs to the SspO family.

Its subcellular location is the spore core. This chain is Small, acid-soluble spore protein O, found in Anoxybacillus flavithermus (strain DSM 21510 / WK1).